Reading from the N-terminus, the 143-residue chain is Large ribosomal subunit protein uL11 (143 aa).

This sequence belongs to the universal ribosomal protein uL11 family. As to quaternary structure, part of the ribosomal stalk of the 50S ribosomal subunit. Interacts with L10 and the large rRNA to form the base of the stalk. L10 forms an elongated spine to which L12 dimers bind in a sequential fashion forming a multimeric L10(L12)X complex. In terms of processing, one or more lysine residues are methylated.

Forms part of the ribosomal stalk which helps the ribosome interact with GTP-bound translation factors. This Polynucleobacter asymbioticus (strain DSM 18221 / CIP 109841 / QLW-P1DMWA-1) (Polynucleobacter necessarius subsp. asymbioticus) protein is Large ribosomal subunit protein uL11.